The chain runs to 513 residues: ATP synthase subunit alpha (513 aa).

An ATP-binding site is contributed by 169–176 (GDRQIGKT).

This sequence belongs to the ATPase alpha/beta chains family. F-type ATPases have 2 components, CF(1) - the catalytic core - and CF(0) - the membrane proton channel. CF(1) has five subunits: alpha(3), beta(3), gamma(1), delta(1), epsilon(1). CF(0) has three main subunits: a(1), b(2) and c(9-12). The alpha and beta chains form an alternating ring which encloses part of the gamma chain. CF(1) is attached to CF(0) by a central stalk formed by the gamma and epsilon chains, while a peripheral stalk is formed by the delta and b chains.

It is found in the cell inner membrane. It carries out the reaction ATP + H2O + 4 H(+)(in) = ADP + phosphate + 5 H(+)(out). In terms of biological role, produces ATP from ADP in the presence of a proton gradient across the membrane. The alpha chain is a regulatory subunit. In Francisella tularensis subsp. holarctica (strain OSU18), this protein is ATP synthase subunit alpha.